The following is an 832-amino-acid chain: Protein P (832 aa).

A terminal protein domain (TP) region spans residues 1–177 (MPLSYQHFRR…FCGSPYSWEQ (177 aa)). A spacer region spans residues 178-335 (ELQHGAESFH…YCLSHIVNLL (158 aa)). A disordered region spans residues 186-229 (FHQQSSGILSRPPVGSSLQSKHSKSRLGLQSQQGHLARRQQGRS). The polymerase/reverse transcriptase domain (RT) stretch occupies residues 336-679 (EDWGPCAEHG…YLNLYPVARQ (344 aa)). The region spanning 346 to 589 (EHHIRTPRTP…YSLNFMGYVI (244 aa)) is the Reverse transcriptase domain. Residues aspartate 418, aspartate 540, and aspartate 541 each coordinate Mg(2+).

This sequence belongs to the hepadnaviridae P protein family.

It carries out the reaction DNA(n) + a 2'-deoxyribonucleoside 5'-triphosphate = DNA(n+1) + diphosphate. The catalysed reaction is Endonucleolytic cleavage to 5'-phosphomonoester.. With respect to regulation, activated by host HSP70 and HSP40 in vitro to be able to bind the epsilon loop of the pgRNA. Because deletion of the RNase H region renders the protein partly chaperone-independent, the chaperones may be needed indirectly to relieve occlusion of the RNA-binding site by this domain. Inhibited by several reverse-transcriptase inhibitors: Lamivudine, Adefovir and Entecavir. Its function is as follows. Multifunctional enzyme that converts the viral RNA genome into dsDNA in viral cytoplasmic capsids. This enzyme displays a DNA polymerase activity that can copy either DNA or RNA templates, and a ribonuclease H (RNase H) activity that cleaves the RNA strand of RNA-DNA heteroduplexes in a partially processive 3'- to 5'-endonucleasic mode. Neo-synthesized pregenomic RNA (pgRNA) are encapsidated together with the P protein, and reverse-transcribed inside the nucleocapsid. Initiation of reverse-transcription occurs first by binding the epsilon loop on the pgRNA genome, and is initiated by protein priming, thereby the 5'-end of (-)DNA is covalently linked to P protein. Partial (+)DNA is synthesized from the (-)DNA template and generates the relaxed circular DNA (RC-DNA) genome. After budding and infection, the RC-DNA migrates in the nucleus, and is converted into a plasmid-like covalently closed circular DNA (cccDNA). The activity of P protein does not seem to be necessary for cccDNA generation, and is presumably released from (+)DNA by host nuclear DNA repair machinery. The chain is Protein P from Hepatitis B virus genotype D (isolate Germany/1-91/1991) (HBV-D).